Reading from the N-terminus, the 476-residue chain is Aspartyl/glutamyl-tRNA(Asn/Gln) amidotransferase subunit B (476 aa).

It belongs to the GatB/GatE family. GatB subfamily. Heterotrimer of A, B and C subunits.

It catalyses the reaction L-glutamyl-tRNA(Gln) + L-glutamine + ATP + H2O = L-glutaminyl-tRNA(Gln) + L-glutamate + ADP + phosphate + H(+). The enzyme catalyses L-aspartyl-tRNA(Asn) + L-glutamine + ATP + H2O = L-asparaginyl-tRNA(Asn) + L-glutamate + ADP + phosphate + 2 H(+). Allows the formation of correctly charged Asn-tRNA(Asn) or Gln-tRNA(Gln) through the transamidation of misacylated Asp-tRNA(Asn) or Glu-tRNA(Gln) in organisms which lack either or both of asparaginyl-tRNA or glutaminyl-tRNA synthetases. The reaction takes place in the presence of glutamine and ATP through an activated phospho-Asp-tRNA(Asn) or phospho-Glu-tRNA(Gln). The polypeptide is Aspartyl/glutamyl-tRNA(Asn/Gln) amidotransferase subunit B (Neisseria meningitidis serogroup B (strain ATCC BAA-335 / MC58)).